The sequence spans 507 residues: Maturase K (507 aa).

This sequence belongs to the intron maturase 2 family. MatK subfamily.

It is found in the plastid. The protein localises to the chloroplast. Usually encoded in the trnK tRNA gene intron. Probably assists in splicing its own and other chloroplast group II introns. The sequence is that of Maturase K from Umbellularia californica (California bay laurel).